An 814-amino-acid chain; its full sequence is Cadherin-15 (814 aa).

An N-terminal signal peptide occupies residues Met1–Gly21. Positions Val22–Arg60 are excised as a propeptide. 5 Cadherin domains span residues Leu61–Phe152, Leu153–Phe260, Thr261–Phe375, Gln376–Pro481, and Val482–Pro590. Over Leu61–Ala606 the chain is Extracellular. N-linked (GlcNAc...) asparagine glycosylation occurs at Asn227. N-linked (GlcNAc...) asparagine glycans are attached at residues Asn531, Asn538, and Asn576. A helical transmembrane segment spans residues Leu607–Leu626. Over Arg627 to Ala814 the chain is Cytoplasmic. Disordered regions lie at residues Gly636–Asp663 and Thr676–Val703.

Expressed in the brain and cerebellum.

It localises to the cell membrane. Its function is as follows. Cadherins are calcium-dependent cell adhesion proteins. They preferentially interact with themselves in a homophilic manner in connecting cells; cadherins may thus contribute to the sorting of heterogeneous cell types. M-cadherin is part of the myogenic program and may provide a trigger for terminal muscle differentiation. The sequence is that of Cadherin-15 (CDH15) from Homo sapiens (Human).